We begin with the raw amino-acid sequence, 350 residues long: Cephaeline 6'-O-methyltransferase IpeOMT1 (350 aa).

Positions 193, 216, 236, 237, and 250 each coordinate S-adenosyl-L-methionine. Histidine 254 (proton acceptor) is an active-site residue.

This sequence belongs to the class I-like SAM-binding methyltransferase superfamily. Cation-independent O-methyltransferase family. As to expression, expressed in roots.

Its subcellular location is the cytoplasm. The protein resides in the cytosol. It carries out the reaction cephaeline + S-adenosyl-L-methionine = emetine + S-adenosyl-L-homocysteine + H(+). The catalysed reaction is deacetylisoipecoside + S-adenosyl-L-methionine = 6-O-methyldeacetylisoipecoside + S-adenosyl-L-homocysteine + H(+). The enzyme catalyses 7-O-methyldeacetylisoipecoside + S-adenosyl-L-methionine = 6,7-O,O-dimethyldeacetylisoipecoside + S-adenosyl-L-homocysteine + H(+). It catalyses the reaction norcoclaurine + S-adenosyl-L-methionine = coclaurine + S-adenosyl-L-homocysteine + H(+). It carries out the reaction (S)-norprotosinomenine + S-adenosyl-L-methionine = (S)-6-O-methylnorprotosinomenine + S-adenosyl-L-homocysteine + H(+). The catalysed reaction is (R)-norprotosinomenine + S-adenosyl-L-methionine = (R)-6-O-methylnorprotosinomenine + S-adenosyl-L-homocysteine + H(+). It functions in the pathway alkaloid biosynthesis. Functionally, O-methyltransferase involved in the biosynthesis of ipecac and benzylisoquinoline monoterpenoid-isoquinoline alkaloids natural products, starting by the condensation of dopamine and secologanin, and including emetine and cephaeline, drugs used both as anti-protozoal (e.g. treatment of ameobiasis) and as emetic agents. Mediates cephaeline 6'-O-methylation to produce emetine. Catalyzes the 6-O-methylation of N-deacetylisoipecoside, 7-O-methyl-N-deacetylisoipecoside, isococlaurine, norcoclaurine, (S)-norprotosinomenine and (R)-norprotosinomenine, and, with a lower efficiency, of 4'-O-methyllaudanosoline, isoorientaline and protosinomenine. Supports also the 4'-O-methylation of nororientaline. The sequence is that of Cephaeline 6'-O-methyltransferase IpeOMT1 from Carapichea ipecacuanha (Ipecac).